Here is a 1616-residue protein sequence, read N- to C-terminus: MARGGSRRRNTSVISTQKIEPSNESTKAPEGPQKRKPKTEIPNSNGNGVIKKEIKKRKLDNELDESQEHLAQLITDFNLSVNELFQLKEYKTIAYWNPDDFSRASSTSQVPEIFDLFSKEPEYQISWGADSNEQDLSNIPLRLQKKIINEREQKLLEKFPFKEKVLKRSRDLEIELLQNIRQSKKTLEKSHIKPSPPVKPSKTSKGNQKIIKKKQVVKQEEEEAQENHQNEEYESDMDEGTHYKLKAVKYSIPPPIVTHPSHIPSWVPDPNHTESSFNSKDSEIIDYHPDAIQFVSNSKTTYTTPNIQAKIQNFLASYKSAIIDETSSGDFNNTLEEYEKIMTQQEQFIKKLYEKTSIEKRLELNGEKIERRKTVLPHSSNTKQAVDPFRSHGAIIPKTQGVTIHSTHHDYFLSHGMAFSRLHQQMRRQHQLRTKKITQMIEQHFKKKKGEKERLAKEKEQNLKRISKMAVQAVKKRWIQASKVYRFLQLQKEEELKKIKGREHLSQMLEHSTQLLEAQFNKSSRDISEVDTENENETDDHLSSSSDEDSGSPQNARDDSNVNMDENDMQLTVEELRAKYADIDQSIEPSSKTISSDSSNHESDSDDEDIDANKGLVALYGNNAVSVEPVSSLAATEYTDEQKTLIEKFSKEDEGISSESVSDDSLNDSSSSESDDDSEVDESNHKQVDSTKPTGLAALLGNGPTEDEEDSNDDVSADSDGNVSDDENMSTTDEEDEPKTPKSSEDPKMDEKENESDVLEEEVNGSKVRDVPLPPLLRGTLRPYQKQGLNWLASLYNNGTNGILADEMGLGKTIQTISLLAYLAAEHHIWGPHLIVVPTSVMLNWEMEFKKFAPGFKVLTYYGSPQQRAQKRKGWNKPNAFHVCITSYQLVVHDHQSFKRRRWRYMILDEAHNIKNFRSARWRALLNFNTENRLLLTGTPLQNNLMELWSLLYFLMPSSKVNQAMPDGFANLEDFQTWFGRPVDKILEKTSNGTSSDVIDENDKTTQRMDEETRNTVSRLHQVLRPYLLRRLKKDVEKQMPGKYEHIIYCRLSKRQRYLYDDFMSRAQTKETLASGNFLSIINCLMQLRKVCNHPDLFEVRPIVTSLAMPRCVANSFASTDSVVRKYLNDDSFKGQVSLKALNLDITSLDQLNYFTSQTTSKLKSSSELDKQADKLNELISASEYDQPNLDNFLEYYKFIKSNEQVGIRDNLKHASYLNSLRCDRIPLLGESVIKFLQTATQPRQPFTDAYNDIILSIPKRVEKMDDVIEKYSVLTPSVVTLDLKDQLIPLSTQRTIMNEVANKNIDNPFHKSQVKLSIAFPDKSLLQFDCGKLQKLATLLQDLTANGHRALIFTQMTKVLDILEQFLNIHGYRYMRLDGATKIEDRQLLTEKFNRDSKIPVFILSTRSGGLGINLTGADTVIFYDSDWNPAMDKQCQDRCHRIGQSRDVHIYRFVSEYTIESNILRKANQKRQLDNVVIQEGEFTTDYFGKFSVKDLVNDAEVADIPDKPLEPAYGNVENVLAQAEDEDDRVAANAAMKEVAIDDEDFDEESKAATNTATPSQTPGPDTAGSGIVDSTVKINNKTDSLEDVDYEDGVSHVDEYMLRFIANGYYWD.

Residues Met1 to Asn10 show a composition bias toward basic residues. Disordered regions lie at residues Met1–Glu53 and Lys185–Asp238. A compositionally biased stretch (polar residues) spans Thr11–Thr26. A compositionally biased stretch (low complexity) spans Pro200 to Lys209. Residues Ile396 to Lys468 enclose the HSA domain. Disordered stretches follow at residues Asn521–Asp565, Ile583–Lys614, and Leu645–Pro774. The span at Glu529 to Thr538 shows a compositional bias: acidic residues. Residues Leu645–Glu654 are compositionally biased toward basic and acidic residues. Residues Thr705–Glu737 are compositionally biased toward acidic residues. Positions Pro738 to Glu751 are enriched in basic and acidic residues. The segment covering Lys752 to Val763 has biased composition (acidic residues). Positions Ala793–Ser958 constitute a Helicase ATP-binding domain. Asp806–Thr813 contributes to the ATP binding site. A DEAH box motif is present at residues Asp909–His912. A disordered region spans residues Asn992–Thr1013. Basic and acidic residues predominate over residues Glu1001 to Thr1013. A Helicase C-terminal domain is found at Lys1333 to Thr1486. A disordered region spans residues Asp1545 to Val1576. Positions Ala1555 to Gly1567 are enriched in polar residues.

This sequence belongs to the SNF2/RAD54 helicase family. SWR1 subfamily. As to quaternary structure, component of the SWR1 chromatin-remodeling complex.

Its subcellular location is the nucleus. The enzyme catalyses ATP + H2O = ADP + phosphate + H(+). Catalytic component of the SWR1 complex which mediates the ATP-dependent exchange of histone H2A for the H2A variant HZT1 leading to transcriptional regulation of selected genes by chromatin remodeling. This chain is Helicase SWR1 (SWR1), found in Debaryomyces hansenii (strain ATCC 36239 / CBS 767 / BCRC 21394 / JCM 1990 / NBRC 0083 / IGC 2968) (Yeast).